The chain runs to 84 residues: Exodeoxyribonuclease 7 small subunit (84 aa).

It belongs to the XseB family. Heterooligomer composed of large and small subunits.

Its subcellular location is the cytoplasm. The catalysed reaction is Exonucleolytic cleavage in either 5'- to 3'- or 3'- to 5'-direction to yield nucleoside 5'-phosphates.. Functionally, bidirectionally degrades single-stranded DNA into large acid-insoluble oligonucleotides, which are then degraded further into small acid-soluble oligonucleotides. The chain is Exodeoxyribonuclease 7 small subunit from Haemophilus influenzae (strain ATCC 51907 / DSM 11121 / KW20 / Rd).